The chain runs to 354 residues: S-adenosylmethionine:tRNA ribosyltransferase-isomerase (354 aa).

This sequence belongs to the QueA family. As to quaternary structure, monomer.

The protein localises to the cytoplasm. It catalyses the reaction 7-aminomethyl-7-carbaguanosine(34) in tRNA + S-adenosyl-L-methionine = epoxyqueuosine(34) in tRNA + adenine + L-methionine + 2 H(+). Its pathway is tRNA modification; tRNA-queuosine biosynthesis. Transfers and isomerizes the ribose moiety from AdoMet to the 7-aminomethyl group of 7-deazaguanine (preQ1-tRNA) to give epoxyqueuosine (oQ-tRNA). This is S-adenosylmethionine:tRNA ribosyltransferase-isomerase from Pseudomonas savastanoi pv. phaseolicola (strain 1448A / Race 6) (Pseudomonas syringae pv. phaseolicola (strain 1448A / Race 6)).